The primary structure comprises 1415 residues: DNA-directed RNA polymerase subunit beta' (1415 aa).

Zn(2+) contacts are provided by cysteine 72, cysteine 74, cysteine 87, and cysteine 90. 3 residues coordinate Mg(2+): aspartate 463, aspartate 465, and aspartate 467. Residues cysteine 811, cysteine 885, cysteine 892, and cysteine 895 each coordinate Zn(2+).

It belongs to the RNA polymerase beta' chain family. In terms of assembly, the RNAP catalytic core consists of 2 alpha, 1 beta, 1 beta' and 1 omega subunit. When a sigma factor is associated with the core the holoenzyme is formed, which can initiate transcription. The cofactor is Mg(2+). Zn(2+) is required as a cofactor.

It catalyses the reaction RNA(n) + a ribonucleoside 5'-triphosphate = RNA(n+1) + diphosphate. In terms of biological role, DNA-dependent RNA polymerase catalyzes the transcription of DNA into RNA using the four ribonucleoside triphosphates as substrates. In Cereibacter sphaeroides (strain ATCC 17025 / ATH 2.4.3) (Rhodobacter sphaeroides), this protein is DNA-directed RNA polymerase subunit beta'.